Reading from the N-terminus, the 462-residue chain is Gamma-glutamylethanolamide synthetase GlnA4 (462 aa).

The region spanning 30-126 is the GS beta-grasp domain; sequence GDIDTVVLAF…AVADLAWEDG (97 aa). Residues 133–462 enclose the GS catalytic domain; the sequence is PRQILRRQLE…WELRRSFERM (330 aa). Residues Glu156 and Glu158 each contribute to the Mg(2+) site. Position 214 (Glu214) interacts with ATP. Mg(2+)-binding residues include Glu219 and Glu226. Gly270 contacts L-glutamate. His274 lines the Mg(2+) pocket. Residue 276-278 participates in ATP binding; sequence HLS. L-glutamate is bound by residues Arg325 and Arg343. The ATP site is built by Arg343 and Arg348. Position 359 (Glu359) interacts with Mg(2+). Position 361 (Arg361) interacts with L-glutamate.

Belongs to the glutamine synthetase family. It depends on Mg(2+) as a cofactor.

The enzyme catalyses ethanolamine + L-glutamate + ATP = gamma-L-glutamylethanolamide + ADP + phosphate + H(+). It functions in the pathway amine and polyamine degradation; ethanolamine degradation. With respect to regulation, very slightly decreased activity with glutamine synthetase (GS) inhibitor methionine sulfoximine (MSO). Functionally, involved in the catabolism of monoamine ethanolamine. Catalyzes the ATP-dependent gamma-glutamylation of ethanolamine. No activity with polyamines. No complementation of the L-glutamine auxotrophy of an E.coli glnA mutant. Enables survival of S.coelicolor under high local environmental ethanolamine conditions. May play a role during starvation conditions to limit intracellular ethanolamine concentration, which in excess is toxic to the cells. The protein is Gamma-glutamylethanolamide synthetase GlnA4 of Streptomyces coelicolor (strain ATCC BAA-471 / A3(2) / M145).